A 406-amino-acid polypeptide reads, in one-letter code: Alpha-1-antitrypsin (406 aa).

The signal sequence occupies residues 1 to 24 (MTSSISWGLLLLAGLCCLVPSFLA). A Phosphoserine modification is found at S33. N-linked (GlcNAc...) asparagine glycans are attached at residues N59, N96, and N260. The segment at 362–381 (GTTVLEAVPMSIPPDVCFKN) is RCL. S372 carries the post-translational modification Phosphoserine.

Belongs to the serpin family. In terms of assembly, interacts with CELA2A. Interacts with ERGIC3 and LMAN1/ERGIC53. Interacts with PRSS1/Trypsin. In terms of tissue distribution, plasma.

Its subcellular location is the secreted. Functionally, inhibitor of serine proteases. Can inhibit elastase, trypsin, chymotrypsin and plasmin. This is Alpha-1-antitrypsin from Meriones unguiculatus (Mongolian jird).